The sequence spans 369 residues: Erythronate-4-phosphate dehydrogenase (369 aa).

Residues serine 45 and threonine 66 each contribute to the substrate site. Aspartate 146 lines the NAD(+) pocket. Arginine 209 is an active-site residue. Aspartate 233 contacts NAD(+). Residue glutamate 238 is part of the active site. Histidine 255 acts as the Proton donor in catalysis. Glycine 258 contacts NAD(+).

This sequence belongs to the D-isomer specific 2-hydroxyacid dehydrogenase family. PdxB subfamily. Homodimer.

The protein resides in the cytoplasm. It catalyses the reaction 4-phospho-D-erythronate + NAD(+) = (R)-3-hydroxy-2-oxo-4-phosphooxybutanoate + NADH + H(+). It participates in cofactor biosynthesis; pyridoxine 5'-phosphate biosynthesis; pyridoxine 5'-phosphate from D-erythrose 4-phosphate: step 2/5. Its function is as follows. Catalyzes the oxidation of erythronate-4-phosphate to 3-hydroxy-2-oxo-4-phosphonooxybutanoate. The polypeptide is Erythronate-4-phosphate dehydrogenase (Porphyromonas gingivalis (strain ATCC BAA-308 / W83)).